A 189-amino-acid polypeptide reads, in one-letter code: MSTLAKIEALLFVAGEDGIRVRQLAELLSLPPTGIQQSLGKLAQKYEKDPDSSLALIETSGAYRLVTKPQFAEILKEYSKAPINQSLSRAALETLSIIAYKQPITRIEIDAIRGVNSSGALAKLQAFDLIKEDGKKEVLGRPNLYVTTDYFLDYMGINHLEELPVIDELEIQAQESQLFGERIEEDENQ.

The protein belongs to the ScpB family. As to quaternary structure, homodimer. Homodimerization may be required to stabilize the binding of ScpA to the Smc head domains. Component of a cohesin-like complex composed of ScpA, ScpB and the Smc homodimer, in which ScpA and ScpB bind to the head domain of Smc. The presence of the three proteins is required for the association of the complex with DNA.

It localises to the cytoplasm. In terms of biological role, participates in chromosomal partition during cell division. May act via the formation of a condensin-like complex containing Smc and ScpA that pull DNA away from mid-cell into both cell halves. In Streptococcus pneumoniae serotype 19F (strain G54), this protein is Segregation and condensation protein B.